The following is a 756-amino-acid chain: Polyribonucleotide nucleotidyltransferase (756 aa).

Residues Asp547 and Asp553 each contribute to the Mg(2+) site. The KH domain maps to 613–672 (PRITSVTIPVNKIGELIGPKGKTINAITEETGADVSIEEDGTVYISAATGEAADAAIDRV). The region spanning 684-753 (GERFLGTVVK…NRGKISLVPV (70 aa)) is the S1 motif domain.

This sequence belongs to the polyribonucleotide nucleotidyltransferase family. It depends on Mg(2+) as a cofactor.

It localises to the cytoplasm. The catalysed reaction is RNA(n+1) + phosphate = RNA(n) + a ribonucleoside 5'-diphosphate. In terms of biological role, involved in mRNA degradation. Catalyzes the phosphorolysis of single-stranded polyribonucleotides processively in the 3'- to 5'-direction. The sequence is that of Polyribonucleotide nucleotidyltransferase from Corynebacterium aurimucosum (strain ATCC 700975 / DSM 44827 / CIP 107346 / CN-1) (Corynebacterium nigricans).